Reading from the N-terminus, the 503-residue chain is Maturase K (503 aa).

It belongs to the intron maturase 2 family. MatK subfamily.

Its subcellular location is the plastid. It is found in the chloroplast. Usually encoded in the trnK tRNA gene intron. Probably assists in splicing its own and other chloroplast group II introns. This chain is Maturase K, found in Rhamnus cathartica (Common buckthorn).